Here is a 157-residue protein sequence, read N- to C-terminus: ATP synthase subunit b (157 aa).

Residues 7–27 (LIAQLVVFFILAWFTMKFVWP) form a helical membrane-spanning segment.

The protein belongs to the ATPase B chain family. In terms of assembly, F-type ATPases have 2 components, F(1) - the catalytic core - and F(0) - the membrane proton channel. F(1) has five subunits: alpha(3), beta(3), gamma(1), delta(1), epsilon(1). F(0) has three main subunits: a(1), b(2) and c(10-14). The alpha and beta chains form an alternating ring which encloses part of the gamma chain. F(1) is attached to F(0) by a central stalk formed by the gamma and epsilon chains, while a peripheral stalk is formed by the delta and b chains.

It is found in the cell inner membrane. Its function is as follows. F(1)F(0) ATP synthase produces ATP from ADP in the presence of a proton or sodium gradient. F-type ATPases consist of two structural domains, F(1) containing the extramembraneous catalytic core and F(0) containing the membrane proton channel, linked together by a central stalk and a peripheral stalk. During catalysis, ATP synthesis in the catalytic domain of F(1) is coupled via a rotary mechanism of the central stalk subunits to proton translocation. Functionally, component of the F(0) channel, it forms part of the peripheral stalk, linking F(1) to F(0). In Azoarcus sp. (strain BH72), this protein is ATP synthase subunit b.